The chain runs to 275 residues: DNA-directed RNA polymerase subunit Rpo3 (275 aa).

It belongs to the archaeal Rpo3/eukaryotic RPB3 RNA polymerase subunit family. In terms of assembly, part of the RNA polymerase complex.

The protein resides in the cytoplasm. The catalysed reaction is RNA(n) + a ribonucleoside 5'-triphosphate = RNA(n+1) + diphosphate. DNA-dependent RNA polymerase (RNAP) catalyzes the transcription of DNA into RNA using the four ribonucleoside triphosphates as substrates. The protein is DNA-directed RNA polymerase subunit Rpo3 of Methanopyrus kandleri (strain AV19 / DSM 6324 / JCM 9639 / NBRC 100938).